A 141-amino-acid polypeptide reads, in one-letter code: Nucleoside diphosphate kinase (141 aa).

Residues Lys-11, Phe-59, Arg-87, Thr-93, Arg-104, and Asn-114 each contribute to the ATP site. The active-site Pros-phosphohistidine intermediate is His-117.

This sequence belongs to the NDK family. As to quaternary structure, homotetramer. Mg(2+) serves as cofactor.

It localises to the cytoplasm. The catalysed reaction is a 2'-deoxyribonucleoside 5'-diphosphate + ATP = a 2'-deoxyribonucleoside 5'-triphosphate + ADP. It carries out the reaction a ribonucleoside 5'-diphosphate + ATP = a ribonucleoside 5'-triphosphate + ADP. Major role in the synthesis of nucleoside triphosphates other than ATP. The ATP gamma phosphate is transferred to the NDP beta phosphate via a ping-pong mechanism, using a phosphorylated active-site intermediate. The polypeptide is Nucleoside diphosphate kinase (Actinobacillus succinogenes (strain ATCC 55618 / DSM 22257 / CCUG 43843 / 130Z)).